We begin with the raw amino-acid sequence, 126 residues long: Glycine cleavage system H protein (126 aa).

In terms of domain architecture, Lipoyl-binding spans 22-104 (TVTIGITEYA…YEKAWMVKVE (83 aa)). The residue at position 63 (Lys63) is an N6-lipoyllysine.

Belongs to the GcvH family. In terms of assembly, the glycine cleavage system is composed of four proteins: P, T, L and H. The cofactor is (R)-lipoate.

The glycine cleavage system catalyzes the degradation of glycine. The H protein shuttles the methylamine group of glycine from the P protein to the T protein. Its function is as follows. Is also involved in protein lipoylation via its role as an octanoyl/lipoyl carrier protein intermediate. The chain is Glycine cleavage system H protein from Staphylococcus haemolyticus (strain JCSC1435).